A 364-amino-acid polypeptide reads, in one-letter code: E3 ubiquitin-protein ligase rnf146 (364 aa).

The tract at residues Lys-18–Leu-37 is disordered. Residues Gly-22–Ser-34 show a composition bias toward low complexity. An RING-type zinc finger spans residues Cys-42–Arg-80. Residues Ser-102–Arg-178 form the WWE domain. A glycoprotein is bound by residues Tyr-118, Arg-121, Trp-125, Tyr-155, Gln-164, Arg-174, and Lys-186. 2 disordered regions span residues Ala-217–Ser-262 and Asn-279–Val-364. Composition is skewed to acidic residues over residues Gln-281–Ala-295 and Thr-308–Glu-322.

It is found in the cytoplasm. It localises to the cytosol. The protein localises to the nucleus. The catalysed reaction is S-ubiquitinyl-[E2 ubiquitin-conjugating enzyme]-L-cysteine + [acceptor protein]-L-lysine = [E2 ubiquitin-conjugating enzyme]-L-cysteine + N(6)-ubiquitinyl-[acceptor protein]-L-lysine.. It functions in the pathway protein modification; protein ubiquitination. In terms of biological role, E3 ubiquitin-protein ligase that specifically binds poly-ADP-ribosylated proteins and mediates their ubiquitination and subsequent degradation. May regulate many important biological processes, such as cell survival and DNA damage response. Acts as an activator of the Wnt signaling pathway by mediating the ubiquitination of poly-ADP-ribosylated proteins. Neuroprotective protein. Protects against cell death induced by DNA damaging agents and rescues cells from G1 arrest. Promotes cell survival after gamma-irradiation. Facilitates DNA repair. The chain is E3 ubiquitin-protein ligase rnf146 (rnf146) from Danio rerio (Zebrafish).